Here is a 1433-residue protein sequence, read N- to C-terminus: Bacillopeptidase F (1433 aa).

A signal peptide spans 1–30 (MRKKTKNRLISSVLSTVVISSLLFPGAAGA). A propeptide spanning residues 31–194 (SSKVTSPSVK…NMKKAQKAIK (164 aa)) is cleaved from the precursor. The 110-residue stretch at 68–177 (TFLIKFKDLA…KVLPNEKRQL (110 aa)) folds into the Inhibitor I9 domain. A Peptidase S8 domain is found at 200–512 (EWNVDQIDAP…HGLVNAFDAV (313 aa)). Residues Asp-227, His-274, and Ser-452 each act as charge relay system in the active site. A propeptide spanning residues 756–1433 (SAYKGQNIQV…NGKLNMNTEN (678 aa)) is cleaved from the precursor. The tract at residues 800-830 (KLGVEKPSGKQKKKPVNPKKAKPSANTAVKH) is disordered. Over residues 808-821 (GKQKKKPVNPKKAK) the composition is skewed to basic residues.

It belongs to the peptidase S8 family.

Its subcellular location is the secreted. The protein is Bacillopeptidase F (bpr) of Bacillus subtilis (strain 168).